Here is a 761-residue protein sequence, read N- to C-terminus: Protein PHTF1 (761 aa).

The region spanning 6-150 (RDAISWYQKK…VHCQIVSTQI (145 aa)) is the PHTF domain. The next 3 membrane-spanning stretches (helical) occupy residues 77–97 (GLVR…VTSL), 99–119 (IFVW…LYLL), and 121–141 (PIVS…MGTV). The segment at 152–184 (RPSGNNGNRRRRKLRKTVNGDGSRDNGNNSPDK) is disordered. Over residues 170 to 181 (NGDGSRDNGNNS) the composition is skewed to low complexity. N-linked (GlcNAc...) asparagine glycans are attached at residues Asn-179 and Asn-224. Phosphoserine is present on residues Ser-272, Ser-276, Ser-277, Ser-333, and Ser-335. The segment at 345-414 (VFSQGSRSGM…NTIHSGTKRD (70 aa)) is disordered. A compositionally biased stretch (low complexity) spans 347 to 363 (SQGSRSGMSGGSRSLNL). Asn-362 carries N-linked (GlcNAc...) asparagine glycosylation. Basic and acidic residues predominate over residues 364 to 375 (SRRDSESTRHDS). Asn-430 carries N-linked (GlcNAc...) asparagine glycosylation. The next 4 helical transmembrane spans lie at 472–492 (GVGY…FPFL), 514–534 (TLFC…INFI), 610–630 (VVVS…CAQV), and 644–664 (WEFL…ASLG). Asn-673 and Asn-732 each carry an N-linked (GlcNAc...) asparagine glycan. A helical transmembrane segment spans residues 736–756 (VVILSAVSGVISDLLGFNIRL).

Interacts with FEM1B. In terms of tissue distribution, widely expressed with highest levels in testis.

The protein localises to the endoplasmic reticulum membrane. It is found in the golgi apparatus. It localises to the cis-Golgi network membrane. The sequence is that of Protein PHTF1 from Mus musculus (Mouse).